A 127-amino-acid chain; its full sequence is MRCFPINDTRFGRELINSICEFTVCILTCHSLSMKRNRCSKSNFFIPNFPTWLDFLLLGLKASSVPDNRCSTLALYFSFSNWKIALLSLFISLSIRITCFPFFEKNRIFLYNSFFCEVYCSKNSCAS.

Residues 84-103 (IALLSLFISLSIRITCFPFF) form a helical membrane-spanning segment.

Its subcellular location is the membrane. This is an uncharacterized protein from Saccharomyces cerevisiae (strain ATCC 204508 / S288c) (Baker's yeast).